Reading from the N-terminus, the 249-residue chain is MKQSIIIPALDLINGQVVRLHQGDYAKQTTYSDNPIKQFDNYVRQGAKQLHLVDLTGAKNPQSRQTALIGKIVEATQCKVQVGGGIRTEQDVADLLAVGANRVVIGSTAVTHRSMVKNWFIKYGAEKFVLALDVNINASGQKIVAISGWQEESGVLLETLIEDFQTVGLQQVLCTDISRDGTLTGSNIGLYQEICEKYPPIQFQSSGGIGSLADIEALKGTGVSGVIVGRALLEGKFTLSEAIKCWQNG.

The active-site Proton acceptor is the D11. The active-site Proton donor is the D133.

It belongs to the HisA/HisF family.

It localises to the cytoplasm. It carries out the reaction 1-(5-phospho-beta-D-ribosyl)-5-[(5-phospho-beta-D-ribosylamino)methylideneamino]imidazole-4-carboxamide = 5-[(5-phospho-1-deoxy-D-ribulos-1-ylimino)methylamino]-1-(5-phospho-beta-D-ribosyl)imidazole-4-carboxamide. Its pathway is amino-acid biosynthesis; L-histidine biosynthesis; L-histidine from 5-phospho-alpha-D-ribose 1-diphosphate: step 4/9. The chain is 1-(5-phosphoribosyl)-5-[(5-phosphoribosylamino)methylideneamino] imidazole-4-carboxamide isomerase from Haemophilus influenzae (strain 86-028NP).